Consider the following 291-residue polypeptide: MTERDFDTPVETPTVQPAPAQGAKPAQTVPVVAVVLAAGFGTRFDPDNPKQLVSVGGKPIVCWSIDAFEHCDRVSDIVVVVNPKVRGEVETLVGEMGYTKVRVIIDGGDERVDSTAAALDMLATAGIPDDAKILIHDAVRPFVEQSAIDGSIDALDQFTAATVAYASTDTVLLTEDLGDLKVVKSVPDRPNTFRAQTPQSFRFATIRHAYDLAAADPDFHPTDDTRVVVDYLPDEPVAIVSGAETNLKITTLEDIPTAERIAEEILGRDPKEEARARMHALLAQAAGQMHR.

Residues 1–23 (MTERDFDTPVETPTVQPAPAQGA) form a disordered region.

Belongs to the IspD/TarI cytidylyltransferase family. IspD subfamily.

The enzyme catalyses 2-C-methyl-D-erythritol 4-phosphate + CTP + H(+) = 4-CDP-2-C-methyl-D-erythritol + diphosphate. Its pathway is isoprenoid biosynthesis; isopentenyl diphosphate biosynthesis via DXP pathway; isopentenyl diphosphate from 1-deoxy-D-xylulose 5-phosphate: step 2/6. Functionally, catalyzes the formation of 4-diphosphocytidyl-2-C-methyl-D-erythritol from CTP and 2-C-methyl-D-erythritol 4-phosphate (MEP). This chain is 2-C-methyl-D-erythritol 4-phosphate cytidylyltransferase, found in Bifidobacterium longum (strain DJO10A).